The chain runs to 414 residues: O-methyltransferase sirM (414 aa).

Aspartate 270 serves as a coordination point for S-adenosyl-L-methionine. The active-site Proton acceptor is histidine 321.

The protein belongs to the class I-like SAM-binding methyltransferase superfamily. Cation-independent O-methyltransferase family. COMT subfamily.

It functions in the pathway mycotoxin biosynthesis. Its function is as follows. O-methyltransferase; part of the gene cluster that mediates the biosynthesis of sirodesmin PL, an epipolythiodioxopiperazine (ETP) characterized by a disulfide bridged cyclic dipeptide and that acts as a phytotoxin which is involved in the blackleg didease of canola. SirD catalyzes the O-prenylation of L-tyrosine (L-Tyr) in the presence of dimethylallyl diphosphate (DMAPP) to yield 4-O-dimethylallyl-L-Tyr, and therefore represents probably the first pathway-specific enzyme in the biosynthesis of sirodesmin PL. 4-O-dimethylallyl-L-Tyr, then undergoes condensation with L-Ser in a reaction catalyzed by the non-ribosomal peptide synthase sirP to form the diketopiperazine (DKP) backbone. Further bishydroxylation of the DKP performed by the cytochrome P450 monooxygenase sirC leads to the production of the intermediate phomamide. This step is essential to form the reactive thiol group required for toxicity of sirodesmin PL. The next steps of sirodesmin biosynthesis are not well understood yet, but some predictions could be made from intermediate compounds identification. Phomamide is converted into phomalizarine via oxidation, probably by sirT. Further oxidation, methylation (by sirM or sirN) and reduction steps convert phomalizarine to deacetyl sirodesmin. Finally, acetyltransferase sirH probably acetylates deacetyl sirodesmin to produce sirodesmin PL. In Leptosphaeria maculans (Blackleg fungus), this protein is O-methyltransferase sirM.